The sequence spans 37 residues: Rugosin-C (37 aa).

A disulfide bond links C31 and C37.

The protein belongs to the frog skin active peptide (FSAP) family. Brevinin subfamily. As to expression, expressed by the skin glands.

It is found in the secreted. In terms of biological role, has antibacterial activity against Gram-positive bacteria. This chain is Rugosin-C, found in Glandirana rugosa (Japanese wrinkled frog).